The following is an 892-amino-acid chain: DNA mismatch repair protein MutS (892 aa).

607–614 (GPNMSGKS) is an ATP binding site.

This sequence belongs to the DNA mismatch repair MutS family.

Its function is as follows. This protein is involved in the repair of mismatches in DNA. It is possible that it carries out the mismatch recognition step. This protein has a weak ATPase activity. The polypeptide is DNA mismatch repair protein MutS (Bacillus cereus (strain AH820)).